The following is a 358-amino-acid chain: DNA primase large subunit PriL (358 aa).

Residues cysteine 234, cysteine 306, cysteine 315, and cysteine 322 each coordinate [4Fe-4S] cluster. Residues 335 to 358 (KLDDTDEEELVDWREDEGEEEADA) are disordered. Acidic residues predominate over residues 338–358 (DTDEEELVDWREDEGEEEADA).

It belongs to the eukaryotic-type primase large subunit family. Heterodimer of a small subunit (PriS) and a large subunit (PriL). [4Fe-4S] cluster is required as a cofactor.

Regulatory subunit of DNA primase, an RNA polymerase that catalyzes the synthesis of short RNA molecules used as primers for DNA polymerase during DNA replication. Stabilizes and modulates the activity of the small subunit, increasing the rate of DNA synthesis, and conferring RNA synthesis capability. The DNA polymerase activity may enable DNA primase to also catalyze primer extension after primer synthesis. May also play a role in DNA repair. The sequence is that of DNA primase large subunit PriL from Haloarcula marismortui (strain ATCC 43049 / DSM 3752 / JCM 8966 / VKM B-1809) (Halobacterium marismortui).